The chain runs to 172 residues: Xanthine-guanine phosphoribosyltransferase (172 aa).

5-phospho-alpha-D-ribose 1-diphosphate is bound by residues 47 to 48 and 106 to 114; these read RG and DDLVDTGKT. Aspartate 107 provides a ligand contact to Mg(2+). Residues aspartate 110 and isoleucine 153 each contribute to the guanine site. The xanthine site is built by aspartate 110 and isoleucine 153. GMP-binding positions include 110–114 and 152–153; these read DTGKT and WI.

It belongs to the purine/pyrimidine phosphoribosyltransferase family. XGPT subfamily. Homotetramer. The cofactor is Mg(2+).

It is found in the cell inner membrane. The catalysed reaction is GMP + diphosphate = guanine + 5-phospho-alpha-D-ribose 1-diphosphate. It carries out the reaction XMP + diphosphate = xanthine + 5-phospho-alpha-D-ribose 1-diphosphate. The enzyme catalyses IMP + diphosphate = hypoxanthine + 5-phospho-alpha-D-ribose 1-diphosphate. It functions in the pathway purine metabolism; GMP biosynthesis via salvage pathway; GMP from guanine: step 1/1. Its pathway is purine metabolism; XMP biosynthesis via salvage pathway; XMP from xanthine: step 1/1. Its function is as follows. Purine salvage pathway enzyme that catalyzes the transfer of the ribosyl-5-phosphate group from 5-phospho-alpha-D-ribose 1-diphosphate (PRPP) to the N9 position of the 6-oxopurines guanine and xanthine to form the corresponding ribonucleotides GMP (guanosine 5'-monophosphate) and XMP (xanthosine 5'-monophosphate), with the release of PPi. To a lesser extent, also acts on hypoxanthine. This is Xanthine-guanine phosphoribosyltransferase from Rhodopseudomonas palustris (strain HaA2).